The primary structure comprises 203 residues: ATP-dependent Clp protease proteolytic subunit (203 aa).

The Nucleophile role is filled by serine 107. Histidine 132 is a catalytic residue.

This sequence belongs to the peptidase S14 family. In terms of assembly, fourteen ClpP subunits assemble into 2 heptameric rings which stack back to back to give a disk-like structure with a central cavity, resembling the structure of eukaryotic proteasomes.

Its subcellular location is the cytoplasm. It carries out the reaction Hydrolysis of proteins to small peptides in the presence of ATP and magnesium. alpha-casein is the usual test substrate. In the absence of ATP, only oligopeptides shorter than five residues are hydrolyzed (such as succinyl-Leu-Tyr-|-NHMec, and Leu-Tyr-Leu-|-Tyr-Trp, in which cleavage of the -Tyr-|-Leu- and -Tyr-|-Trp bonds also occurs).. Cleaves peptides in various proteins in a process that requires ATP hydrolysis. Has a chymotrypsin-like activity. Plays a major role in the degradation of misfolded proteins. The polypeptide is ATP-dependent Clp protease proteolytic subunit (Thermotoga maritima (strain ATCC 43589 / DSM 3109 / JCM 10099 / NBRC 100826 / MSB8)).